The following is a 152-amino-acid chain: D-aminoacyl-tRNA deacylase (152 aa).

Residues 142 to 143 (GP) carry the Gly-cisPro motif, important for rejection of L-amino acids motif.

This sequence belongs to the DTD family. In terms of assembly, homodimer.

Its subcellular location is the cytoplasm. It carries out the reaction glycyl-tRNA(Ala) + H2O = tRNA(Ala) + glycine + H(+). The catalysed reaction is a D-aminoacyl-tRNA + H2O = a tRNA + a D-alpha-amino acid + H(+). In terms of biological role, an aminoacyl-tRNA editing enzyme that deacylates mischarged D-aminoacyl-tRNAs. Also deacylates mischarged glycyl-tRNA(Ala), protecting cells against glycine mischarging by AlaRS. Acts via tRNA-based rather than protein-based catalysis; rejects L-amino acids rather than detecting D-amino acids in the active site. By recycling D-aminoacyl-tRNA to D-amino acids and free tRNA molecules, this enzyme counteracts the toxicity associated with the formation of D-aminoacyl-tRNA entities in vivo and helps enforce protein L-homochirality. The polypeptide is D-aminoacyl-tRNA deacylase (Paraburkholderia xenovorans (strain LB400)).